We begin with the raw amino-acid sequence, 431 residues long: MSLQSKHFIQALKNGVVPATGCTEPIAVAFGAATCMAQLTNREIQAIEVHVSPNVMKNALAVMVPGTGEPGLLVAAAAGAIAGDATVGLSVIEGLRATDLPTILDLAHSGKVTAKTALVPDDLYVEVTIKDLENTVTVAIAGSHTNIFSLKKDDQILIDHPRPAAHASSESKQFLQTMNFKAVWDFAMNEPLEHLRFMKEAHTLNLALAQDGFTHDYGLQLGQSINGAKRNHFGSGTENDLGNRMIAYAAAASDARMGGAQLPAMSNSGSGNQGITATIPVSVAADAVQATEEQLIRAQALSHLTALYIHSFLPVLSAFCATDSAAMGAAAGVVYLYDGTYEDACHAIQNMAGDAAGMICDGAGCACAMKVATAVSSMYRGVNLALQGIVIPNSNGIVCPTIDETIHGIGRLGTEGLRETDPVILDIMLNK.

The protein belongs to the UPF0597 family.

The polypeptide is UPF0597 protein LCA_0156 (Latilactobacillus sakei subsp. sakei (strain 23K) (Lactobacillus sakei subsp. sakei)).